We begin with the raw amino-acid sequence, 1491 residues long: Terminal uridylyltransferase 7 (1491 aa).

Threonine 64 bears the Phosphothreonine mark. Phosphoserine is present on residues serine 132 and serine 172. Positions 165 to 203 (MSEMEAGSPENKKQRSRPRKPRRTRTEDSEQDGDLDGPV) are disordered. A compositionally biased stretch (basic residues) spans 178–187 (QRSRPRKPRR). The Matrin-type zinc-finger motif lies at 244–274 (YTCKLCDALIDSIPFAHKHIKEKRHKKNLKE). The region spanning 551 to 600 (VGQLWVELLRFYALEFNLADLVISIRVKELISRESKDWPKKRIAIEDPYS) is the PAP-associated 1 domain. 2 positions are modified to phosphoserine: serine 600 and serine 747. 2 disordered regions span residues 740–774 (AELP…KHPE) and 834–911 (QSRT…CGEN). Residues 844–857 (DDEEEEEEEEEEEE) are compositionally biased toward acidic residues. Threonine 865 carries the phosphothreonine modification. The segment covering 885-897 (GEEDALSEEDDLA) has biased composition (acidic residues). Serine 891 carries the post-translational modification Phosphoserine. Residues 947-1491 (RKLTFTKGKS…ASVKRTQQES (545 aa)) are sufficient for monouridylation activity. A CCHC-type 1 zinc finger spans residues 959-976 (VVCSLCKREGHLKKDCPE). UTP contacts are provided by residues 1043-1046 (SSKN), 1053-1056 (SDLD), asparagine 1126, lysine 1148, 1166-1170 (SYAYT), and histidine 1282. 2 residues coordinate Mg(2+): aspartate 1054 and aspartate 1056. In terms of domain architecture, PAP-associated 2 spans 1230–1282 (VGQLWLGLLRFYTEEFDFKEHVISIRRKSLLTTFKKQWTSKYIVIEDPFDLNH). The segment at 1341-1358 (RCCRICGKIGHFMKDCPM) adopts a CCHC-type 2 zinc-finger fold. Disordered regions lie at residues 1362 to 1399 (VRRR…EKEV) and 1463 to 1491 (PQFK…QQES). Residues 1377 to 1399 (SESKEKRSKEDKEIQNKYTEKEV) show a composition bias toward basic and acidic residues. The CCHC-type 3 zinc finger occupies 1447–1464 (KRCFICGREGHIKKECPQ). Positions 1470-1481 (GSLSSKYMTQGR) are enriched in polar residues.

The protein belongs to the DNA polymerase type-B-like family. Requires Mg(2+) as cofactor. Mn(2+) serves as cofactor.

It localises to the cytoplasm. The enzyme catalyses RNA(n) + UTP = RNA(n)-3'-uridine ribonucleotide + diphosphate. Functionally, uridylyltransferase that mediates the terminal uridylation of mRNAs with short (less than 25 nucleotides) poly(A) tails, hence facilitating global mRNA decay. Essential for both oocyte maturation and fertility. Through 3' terminal uridylation of mRNA, sculpts, with TUT7, the maternal transcriptome by eliminating transcripts during oocyte growth. Involved in microRNA (miRNA)-induced gene silencing through uridylation of deadenylated miRNA targets. Also acts as a suppressor of miRNA biogenesis by mediating the terminal uridylation of miRNA precursors, including that of let-7 (pre-let-7). Uridylated pre-let-7 RNA is not processed by Dicer and undergo degradation. Pre-let-7 uridylation is strongly enhanced in the presence of LIN28A. Due to functional redundancy between ZCCHC6 and ZCCHC11, the identification of the specific role of each of these proteins is difficult. Involved in microRNA (miRNA)-induced gene silencing through uridylation of deadenylated miRNA targets. Also functions as an integral regulator of microRNA biogenesiS using 3 different uridylation mechanisms. Acts as a suppressor of miRNA biogenesis by mediating the terminal uridylation of some miRNA precursors, including that of let-7 (pre-let-7). Uridylated pre-let-7 RNA is not processed by Dicer and undergo degradation. Pre-let-7 oligouridylation is strongly enhanced in the presence of LIN28A. In the absence of LIN28A, TUT7 and TUT4 monouridylate group II pre-miRNAs, which includes most of pre-let7 members, that shapes an optimal 3' end overhang for efficient processing. Add oligo-U tails to truncated pre-miRNAS with a 5' overhang which may promote rapid degradation of non-functional pre-miRNA species. Does not play a role in replication-dependent histone mRNA degradation. Due to functional redundancy between TUT4 and TUT7, the identification of the specific role of each of these proteins is difficult. TUT4 and TUT7 restrict retrotransposition of long interspersed element-1 (LINE-1) in cooperation with MOV10 counteracting the RNA chaperonne activity of L1RE1. TUT7 uridylates LINE-1 mRNAs in the cytoplasm which inhibits initiation of reverse transcription once in the nucleus, whereas uridylation by TUT4 destabilizes mRNAs in cytoplasmic ribonucleoprotein granules. The sequence is that of Terminal uridylyltransferase 7 from Mus musculus (Mouse).